A 448-amino-acid polypeptide reads, in one-letter code: Adenylosuccinate synthetase (448 aa).

GTP-binding positions include Gly36–Lys42 and Gly64–Thr66. Asp37 (proton acceptor) is an active-site residue. Mg(2+) is bound by residues Asp37 and Gly64. IMP-binding positions include Asp37–Lys40, Asn62–His65, Thr154, Arg168, Asn246, Thr261, and Arg325. His65 serves as the catalytic Proton donor. Residue Val321–Arg327 participates in substrate binding. Residues Arg327, Lys353–Asp355, and Gly436–Gly438 each bind GTP.

Belongs to the adenylosuccinate synthetase family. In terms of assembly, homodimer. Mg(2+) is required as a cofactor.

It is found in the cytoplasm. The enzyme catalyses IMP + L-aspartate + GTP = N(6)-(1,2-dicarboxyethyl)-AMP + GDP + phosphate + 2 H(+). It functions in the pathway purine metabolism; AMP biosynthesis via de novo pathway; AMP from IMP: step 1/2. Plays an important role in the de novo pathway and in the salvage pathway of purine nucleotide biosynthesis. Catalyzes the first committed step in the biosynthesis of AMP from IMP. The chain is Adenylosuccinate synthetase from Drosophila mojavensis (Fruit fly).